A 353-amino-acid chain; its full sequence is Polyadenylate-binding protein-interacting protein 10 (353 aa).

A disordered region spans residues 1–61 (MAVAENAGVK…IDSTPETDDR (61 aa)). The span at 20–31 (NNNTAASATETT) shows a compositional bias: low complexity. The PAM2-like motif lies at 96–106 (KLNPMAQEFVP). The interval 128–159 (AAPPKLADGNDHFPRRRRSFGQGKRRMNKRTS) is disordered. Basic residues predominate over residues 141–156 (PRRRRSFGQGKRRMNK). A Bipartite nuclear localization signal motif is present at residues 142–153 (RRRRSFGQGKRR). RRM domains are found at residues 169 to 244 (RTVY…PSKT) and 266 to 341 (RTVY…PSKT).

Expressed in cauline leaves, stems, rosette leaves, immature siliques and primary inflorescences.

It localises to the nucleus. This chain is Polyadenylate-binding protein-interacting protein 10 (CID10), found in Arabidopsis thaliana (Mouse-ear cress).